Reading from the N-terminus, the 188-residue chain is Elongation factor P (188 aa).

The protein belongs to the elongation factor P family.

The protein localises to the cytoplasm. It functions in the pathway protein biosynthesis; polypeptide chain elongation. Its function is as follows. Involved in peptide bond synthesis. Stimulates efficient translation and peptide-bond synthesis on native or reconstituted 70S ribosomes in vitro. Probably functions indirectly by altering the affinity of the ribosome for aminoacyl-tRNA, thus increasing their reactivity as acceptors for peptidyl transferase. This is Elongation factor P from Ralstonia nicotianae (strain ATCC BAA-1114 / GMI1000) (Ralstonia solanacearum).